Here is a 311-residue protein sequence, read N- to C-terminus: Ribonuclease HIII (311 aa).

Residues 95-311 (MSIVGSDEVG…NTEKAFRLLK (217 aa)) enclose the RNase H type-2 domain. Residues aspartate 101, glutamate 102, and aspartate 206 each contribute to the a divalent metal cation site.

This sequence belongs to the RNase HII family. RnhC subfamily. Requires Mn(2+) as cofactor. It depends on Mg(2+) as a cofactor.

The protein localises to the cytoplasm. It carries out the reaction Endonucleolytic cleavage to 5'-phosphomonoester.. Functionally, endonuclease that specifically degrades the RNA of RNA-DNA hybrids. The chain is Ribonuclease HIII from Bacillus cereus (strain 03BB102).